The primary structure comprises 409 residues: Histidine--tRNA ligase (409 aa).

This sequence belongs to the class-II aminoacyl-tRNA synthetase family.

It is found in the cytoplasm. The enzyme catalyses tRNA(His) + L-histidine + ATP = L-histidyl-tRNA(His) + AMP + diphosphate + H(+). This is Histidine--tRNA ligase (hisS) from Archaeoglobus fulgidus (strain ATCC 49558 / DSM 4304 / JCM 9628 / NBRC 100126 / VC-16).